The primary structure comprises 208 residues: 3-isopropylmalate dehydratase small subunit 2 (208 aa).

The interval glutamate 163 to alanine 208 is disordered.

It belongs to the LeuD family. LeuD type 2 subfamily. Heterodimer of LeuC and LeuD.

It carries out the reaction (2R,3S)-3-isopropylmalate = (2S)-2-isopropylmalate. It participates in amino-acid biosynthesis; L-leucine biosynthesis; L-leucine from 3-methyl-2-oxobutanoate: step 2/4. In terms of biological role, catalyzes the isomerization between 2-isopropylmalate and 3-isopropylmalate, via the formation of 2-isopropylmaleate. The chain is 3-isopropylmalate dehydratase small subunit 2 (leuD2) from Deinococcus radiodurans (strain ATCC 13939 / DSM 20539 / JCM 16871 / CCUG 27074 / LMG 4051 / NBRC 15346 / NCIMB 9279 / VKM B-1422 / R1).